The primary structure comprises 351 residues: Dihydroorotate dehydrogenase (quinone) (351 aa).

Residues 61–65 (AGLDK) and T85 contribute to the FMN site. Substrate is bound at residue K65. Position 110 to 114 (110 to 114 (NRMGF)) interacts with substrate. Positions 139 and 172 each coordinate FMN. A substrate-binding site is contributed by N172. S175 (nucleophile) is an active-site residue. N177 lines the substrate pocket. Residues K217 and T245 each coordinate FMN. 246–247 (NT) contributes to the substrate binding site. FMN-binding positions include G268, G297, and 318-319 (YS).

The protein belongs to the dihydroorotate dehydrogenase family. Type 2 subfamily. As to quaternary structure, monomer. FMN is required as a cofactor.

It is found in the cell membrane. The enzyme catalyses (S)-dihydroorotate + a quinone = orotate + a quinol. Its pathway is pyrimidine metabolism; UMP biosynthesis via de novo pathway; orotate from (S)-dihydroorotate (quinone route): step 1/1. Functionally, catalyzes the conversion of dihydroorotate to orotate with quinone as electron acceptor. The chain is Dihydroorotate dehydrogenase (quinone) from Stenotrophomonas maltophilia (strain K279a).